The sequence spans 263 residues: uncharacterized protein (263 aa).

ATP is bound at residue 16-23 (AKGGTGKT).

This sequence to M.jannaschii MJ0547 and MJ0169.

This is an uncharacterized protein from Methanocaldococcus jannaschii (strain ATCC 43067 / DSM 2661 / JAL-1 / JCM 10045 / NBRC 100440) (Methanococcus jannaschii).